We begin with the raw amino-acid sequence, 562 residues long: uncharacterized protein (562 aa).

5 helical membrane-spanning segments follow: residues 10-27, 34-53, 63-85, 92-114, and 155-177; these read IYPEIAVFLSLAIGYWVG, FSLGAVTATLLAAVVIGQFD, IFFLMFLFAVGYGIGPQFVQGIA, ALFAVVACLFSLLFPILCAKIAG, and FSVIPVAYAVTYIFGTVGSAIVL. 2 RCK C-terminal domains span residues 204 to 288 and 290 to 377; these read TENA…HPDS and DETQ…QLGV. 6 helical membrane passes run 387–404, 408–430, 443–465, 475–497, 504–526, and 539–561; these read VAFWAFAIVIGALLGSLV, GNLPLTLSTAGGVLIAGLIFSWV, PTVWFMNSVGLNVFIAAIGISAG, LGFSLFLWGVVATTLPLFFAALV, FHPAILLGCCAGARTTTASLGMI, and YTITYAVGNTLLTMWGLVLILIL.

This sequence belongs to the AAE transporter (TC 2.A.81) family.

The protein localises to the cell membrane. This is an uncharacterized protein from Shewanella oneidensis (strain ATCC 700550 / JCM 31522 / CIP 106686 / LMG 19005 / NCIMB 14063 / MR-1).